We begin with the raw amino-acid sequence, 1428 residues long: DNA topoisomerase 2 (1428 aa).

ATP is bound by residues N70, N99, S127–N129, and G140–K147. Residues K333–K336 are interaction with DNA. ATP is bound at residue Q365–K367. Positions C443 to L557 constitute a Toprim domain. 3 residues coordinate Mg(2+): E449, D526, and D528. Residues I692–L1159 form the Topo IIA-type catalytic domain. Y782 functions as the O-(5'-phospho-DNA)-tyrosine intermediate in the catalytic mechanism. Residues K965–N974 are interaction with DNA. Disordered stretches follow at residues K1083–V1102, A1176–K1217, K1240–K1288, and M1303–D1428. T1086 carries the phosphothreonine; by CK2 modification. At S1087 the chain carries Phosphoserine; by CK2. Residues K1207–K1217 show a composition bias toward basic residues. Phosphoserine is present on S1252. A Phosphothreonine; by CK2 modification is found at T1258. Residues S1266, S1269, and S1272 each carry the phosphoserine; by CK2 modification. A compositionally biased stretch (basic and acidic residues) spans D1275 to L1286. Positions T1332–Q1347 are enriched in basic residues. Residues S1353, S1356, S1408, and S1423 each carry the phosphoserine; by CK2 modification. Acidic residues predominate over residues E1403–D1428.

Belongs to the type II topoisomerase family. As to quaternary structure, homodimer. Mg(2+) serves as cofactor. It depends on Mn(2+) as a cofactor. Requires Ca(2+) as cofactor. Post-translationally, phosphorylation enhances the activity. Stimulates decatenation activity.

It is found in the nucleus. It catalyses the reaction ATP-dependent breakage, passage and rejoining of double-stranded DNA.. Control of topological states of DNA by transient breakage and subsequent rejoining of DNA strands. Topoisomerase II makes double-strand breaks. Essential during mitosis and meiosis for proper segregation of daughter chromosomes. The sequence is that of DNA topoisomerase 2 (TOP2) from Saccharomyces cerevisiae (strain ATCC 204508 / S288c) (Baker's yeast).